A 339-amino-acid polypeptide reads, in one-letter code: Probable cytosolic iron-sulfur protein assembly protein CIAO1 (339 aa).

WD repeat units lie at residues 14-53 (HPDS…WICK), 59-98 (GHQR…FECV), 103-142 (GHEN…EYEC), 148-187 (SHTQ…WVCC), 192-231 (GHES…NEQG), 250-289 (FHTR…DPQQ), and 301-339 (AHSQ…PAGL). The LYR motif; required for interaction with HSC20 motif lies at 176–178 (LYQ).

Belongs to the WD repeat CIA1 family. In terms of assembly, component of the CIA complex. Interacts with CIAO2A and forms a complex with CIAO2B and MMS19; the interactions with CIAO2A and CIAO2B are mutually exclusive. Interacts with CHD1L, ERCC2, IREB2 and POLD1. Component of the MMXD complex, which includes CIAO1, ERCC2, CIAO2B, MMS19 and SLC25A5. Interacts with WT1. Interacts with CIAO3. Interacts (via LYR motif) with HSC20.

The protein resides in the cytoplasm. Functionally, key component of the cytosolic iron-sulfur protein assembly (CIA) complex, a multiprotein complex that mediates the incorporation of iron-sulfur cluster into extramitochondrial Fe/S proteins. As a CIA complex component, interacts specifically with CIAO2A or CIAO2B and MMS19 to assist different branches of iron-sulfur protein assembly, depending of its interactors. The complex CIAO1:CIAO2B:MMS19 binds to and facilitates the assembly of most cytosolic-nuclear Fe/S proteins. CIAO1:CIAO2A specifically matures ACO1 and stabilizes IREB2. Seems to specifically modulate the transactivation activity of WT1. As part of the mitotic spindle-associated MMXD complex it may play a role in chromosome segregation. This Rattus norvegicus (Rat) protein is Probable cytosolic iron-sulfur protein assembly protein CIAO1.